The following is a 1684-amino-acid chain: A-kinase anchor protein 12 (1684 aa).

Residues 1–124 are disordered; the sequence is MGAGSSTEQR…DITKDEQEET (124 aa). G2 carries the N-myristoyl glycine lipid modification. Phosphoserine occurs at positions 11, 18, 22, and 27. The segment covering 30 to 48 has biased composition (low complexity); sequence GPAAEASGAAGDPADADPA. Residues 75–86 are compositionally biased toward acidic residues; the sequence is ESQDGQEEEVTV. Basic and acidic residues predominate over residues 89 to 105; sequence VGQRESEDVKEKDRAKE. S136 is subject to Phosphoserine. Disordered stretches follow at residues 175-281 and 296-353; these read SDTV…ETTS and KKTS…SADY. Residues 212–227 are compositionally biased toward basic and acidic residues; the sequence is ASKESELKQSTEKQEG. Polar residues predominate over residues 228 to 247; sequence TLKQAQSSTEIPLQAESGQG. A phosphoserine mark is found at S234 and S244. Residues 251–266 are compositionally biased toward basic and acidic residues; sequence EAAKDGEENREKEPTK. Residues 253 to 543 are involved in PKC-binding; sequence AKDGEENREK…QHIQTESPES (291 aa). Residues S270 and S273 each carry the phosphoserine modification. The span at 270-281 shows a compositional bias: polar residues; that stretch reads SPTSPVSNETTS. A compositionally biased stretch (basic and acidic residues) spans 302-320; sequence KPKEDDLETSEKRKEQEAE. The segment covering 321–342 has biased composition (acidic residues); it reads KVDEEEGEKTEPAPAEEQEPAE. Position 330 is a phosphothreonine (T330). Position 350 is a phosphoserine (S350). Y353 is subject to Phosphotyrosine. A phosphoserine mark is found at S371 and S467. The tract at residues 421–479 is disordered; the sequence is GSGESLPPEKLAETQEVPQEAEPVEELMKTKEVCVSGGDHTQLTDLSPEEKMLPKHPEG. Residues 468–478 are compositionally biased toward basic and acidic residues; sequence PEEKMLPKHPE. 3 positions are modified to phosphoserine: S489, S505, and S507. The interval 492 to 825 is disordered; sequence RIKVQGSPLK…INEDDPDVPA (334 aa). Over residues 497-511 the composition is skewed to low complexity; sequence GSPLKKLFSSSGLKK. Basic residues predominate over residues 512 to 521; that stretch reads LSGKKQKGKR. S540, S543, S584, S598, S613, and S615 each carry phosphoserine. Residues 593–613 carry the AKAP CaM-binding 1 motif; the sequence is ITPWASFKKMVTPKKRVRRPS. A compositionally biased stretch (basic and acidic residues) spans 611 to 625; that stretch reads RPSESDKEEELDKVK. Over residues 626 to 637 the composition is skewed to low complexity; that stretch reads SATLSSTESTAS. Phosphothreonine is present on T628. 4 positions are modified to phosphoserine: S630, S631, S634, and S637. Residues 641–660 show a composition bias toward basic and acidic residues; the sequence is DEVRAVGEEQRSEEPKRRVD. Residues S682, S683, and S684 each carry the phosphoserine modification. Over residues 696–710 the composition is skewed to basic and acidic residues; that stretch reads DGHRAEEASKDKEAD. The span at 714 to 723 shows a compositional bias: polar residues; sequence ASTQEQDQAH. Low complexity predominate over residues 724-741; sequence GSSSPEPAGSPSEGEGVS. Phosphoserine occurs at positions 733, 745, 767, and 786. The AKAP CaM-binding 2 signature appears at 740 to 760; the sequence is VSTWESFKRLVTPRKKSKSKL. An AKAP CaM-binding 3 motif is present at residues 781–801; sequence EESWVSIKKFIPGRRKKRADG. T871 bears the Phosphothreonine mark. S873 carries the phosphoserine modification. The tract at residues 970–1001 is disordered; the sequence is TEASGAEETTDMVSAVSQLSDSPDTTEEATPV. A compositionally biased stretch (polar residues) spans 980 to 992; that stretch reads DMVSAVSQLSDSP. K1030 participates in a covalent cross-link: Glycyl lysine isopeptide (Lys-Gly) (interchain with G-Cter in SUMO1). 4 disordered regions span residues 1055–1106, 1121–1211, 1232–1365, and 1391–1492; these read VEED…VTED, LMEQ…DVLE, EGEA…DKAD, and TVAT…REKI. S1059 bears the Phosphoserine mark. Polar residues predominate over residues 1130–1176; the sequence is SSETLTDSETNGSTPLADSDTPNGTQQDETVDSQDSNAIAAVKQSQV. Basic and acidic residues-rich tracts occupy residues 1198–1210 and 1239–1254; these read QEEH…RDVL and DGEK…ELEV. S1292 carries the phosphoserine modification. Basic and acidic residues predominate over residues 1293–1331; the sequence is PEKREMGTDVEKEETETKTEQASEEHEQETAAPEHEGTH. Residues S1351, S1355, and S1357 each carry the phosphoserine modification. Positions 1467-1492 are enriched in basic and acidic residues; sequence QRSDEDNKPDAGPDAAGKESAAREKI. The RII-binding stretch occupies residues 1501 to 1514; it reads ELESKSNKIVQSVI. S1546 and S1645 each carry phosphoserine. The disordered stretch occupies residues 1568–1684; the sequence is TLSAVAQEGL…QEPKGDLTES (117 aa). The span at 1653-1684 shows a compositional bias: basic and acidic residues; it reads LTEEGDALKEEMNKAQTEEDDLQEPKGDLTES.

In terms of assembly, binds to dimeric RII-alpha regulatory subunit of PKC. As to expression, isoform 1 is predominantly found in the nervous system. Isoform 3 is testis specific.

The protein localises to the cytoplasm. It localises to the cytoskeleton. The protein resides in the membrane. Anchoring protein that mediates the subcellular compartmentation of protein kinase A (PKA) and protein kinase C (PKC). This is A-kinase anchor protein 12 (Akap12) from Mus musculus (Mouse).